The following is a 462-amino-acid chain: Cysteine--tRNA ligase (462 aa).

A Zn(2+)-binding site is contributed by Cys29. The short motif at Pro31 to Asn41 is the 'HIGH' region element. 3 residues coordinate Zn(2+): Cys214, His239, and Glu243. Positions Lys272–Ser276 match the 'KMSKS' region motif. Lys275 contributes to the ATP binding site.

The protein belongs to the class-I aminoacyl-tRNA synthetase family. As to quaternary structure, monomer. The cofactor is Zn(2+).

It localises to the cytoplasm. It carries out the reaction tRNA(Cys) + L-cysteine + ATP = L-cysteinyl-tRNA(Cys) + AMP + diphosphate. This Xanthobacter autotrophicus (strain ATCC BAA-1158 / Py2) protein is Cysteine--tRNA ligase.